Reading from the N-terminus, the 396-residue chain is Phosphoglycerate kinase (396 aa).

Residues 24–26, Arg39, 62–65, Arg120, and Arg153 contribute to the substrate site; these read DFN and HLGR. ATP contacts are provided by residues Lys203, Gly294, Glu325, and 352–355; that span reads GGDS.

This sequence belongs to the phosphoglycerate kinase family. As to quaternary structure, monomer.

The protein localises to the cytoplasm. The catalysed reaction is (2R)-3-phosphoglycerate + ATP = (2R)-3-phospho-glyceroyl phosphate + ADP. Its pathway is carbohydrate degradation; glycolysis; pyruvate from D-glyceraldehyde 3-phosphate: step 2/5. The sequence is that of Phosphoglycerate kinase from Dictyoglomus turgidum (strain DSM 6724 / Z-1310).